Consider the following 116-residue polypeptide: Nucleoid-associated protein PMT9312_0020 (116 aa).

It belongs to the YbaB/EbfC family. In terms of assembly, homodimer.

It localises to the cytoplasm. The protein resides in the nucleoid. Its function is as follows. Binds to DNA and alters its conformation. May be involved in regulation of gene expression, nucleoid organization and DNA protection. The sequence is that of Nucleoid-associated protein PMT9312_0020 from Prochlorococcus marinus (strain MIT 9312).